Reading from the N-terminus, the 577-residue chain is Arginine--tRNA ligase (577 aa).

A 'HIGH' region motif is present at residues 122–132; it reads PNVAKEMHVGH.

This sequence belongs to the class-I aminoacyl-tRNA synthetase family. As to quaternary structure, monomer.

It is found in the cytoplasm. The enzyme catalyses tRNA(Arg) + L-arginine + ATP = L-arginyl-tRNA(Arg) + AMP + diphosphate. The protein is Arginine--tRNA ligase of Escherichia coli O139:H28 (strain E24377A / ETEC).